We begin with the raw amino-acid sequence, 150 residues long: FAD synthase (150 aa).

Residues 11-12 (TF), 16-19 (HPGH), Asp-96, and Tyr-124 each bind ATP.

Belongs to the archaeal FAD synthase family. Homodimer. The cofactor is a divalent metal cation.

The catalysed reaction is FMN + ATP + H(+) = FAD + diphosphate. It functions in the pathway cofactor biosynthesis; FAD biosynthesis; FAD from FMN: step 1/1. Functionally, catalyzes the transfer of the AMP portion of ATP to flavin mononucleotide (FMN) to produce flavin adenine dinucleotide (FAD) coenzyme. The sequence is that of FAD synthase from Methanocaldococcus fervens (strain DSM 4213 / JCM 15782 / AG86) (Methanococcus fervens).